Reading from the N-terminus, the 865-residue chain is Protein translocase subunit SecA (865 aa).

ATP-binding positions include Gln-93, 111 to 115, and Asp-501; that span reads GEGKT. Zn(2+) contacts are provided by Cys-841, Cys-843, Cys-852, and Cys-853.

This sequence belongs to the SecA family. As to quaternary structure, monomer and homodimer. Part of the essential Sec protein translocation apparatus which comprises SecA, SecYEG and auxiliary proteins SecDF-YajC and YidC. Zn(2+) serves as cofactor.

It is found in the cell inner membrane. Its subcellular location is the cytoplasm. The catalysed reaction is ATP + H2O + cellular proteinSide 1 = ADP + phosphate + cellular proteinSide 2.. Part of the Sec protein translocase complex. Interacts with the SecYEG preprotein conducting channel. Has a central role in coupling the hydrolysis of ATP to the transfer of proteins into and across the cell membrane, serving as an ATP-driven molecular motor driving the stepwise translocation of polypeptide chains across the membrane. The chain is Protein translocase subunit SecA from Helicobacter pylori (strain P12).